Here is a 218-residue protein sequence, read N- to C-terminus: Glycerol-3-phosphate acyltransferase (218 aa).

6 consecutive transmembrane segments (helical) span residues 3–23, 53–73, 82–102, 112–132, 142–162, and 166–186; these read FAIFAFLSFISGSIPFGYWIA, GFPVLVLDVAKGIFPVYLSGI, FQLACGVLAVLGHMFSPFLGF, LGVFLVLTPIACFGAIFVFLV, IGSIFASLTLPLVYAFSSILL, and EVSYWILGTMVFISIGIILTH.

This sequence belongs to the PlsY family. In terms of assembly, probably interacts with PlsX.

It localises to the cell inner membrane. It catalyses the reaction an acyl phosphate + sn-glycerol 3-phosphate = a 1-acyl-sn-glycero-3-phosphate + phosphate. Its pathway is lipid metabolism; phospholipid metabolism. Functionally, catalyzes the transfer of an acyl group from acyl-phosphate (acyl-PO(4)) to glycerol-3-phosphate (G3P) to form lysophosphatidic acid (LPA). This enzyme utilizes acyl-phosphate as fatty acyl donor, but not acyl-CoA or acyl-ACP. The polypeptide is Glycerol-3-phosphate acyltransferase (Leptospira borgpetersenii serovar Hardjo-bovis (strain JB197)).